The chain runs to 578 residues: CTP synthase 2 (578 aa).

The Glutamine amidotransferase type-1 domain occupies 305–564 (KIALVGKYTN…VAAASGTLGD (260 aa)). Active-site for GATase activity residues include cysteine 404, histidine 537, and glutamate 539.

The protein belongs to the CTP synthase family. In terms of assembly, homodimer. Oligomerizes to a tetramer in the presence of its substrates UTP and ATP. Mg(2+) is required as a cofactor.

The protein resides in the cytoplasm. It catalyses the reaction UTP + L-glutamine + ATP + H2O = CTP + L-glutamate + ADP + phosphate + 2 H(+). The protein operates within pyrimidine metabolism; CTP biosynthesis via de novo pathway; CTP from UDP: step 2/2. Its activity is regulated as follows. Activated by GTP. Subject to allosteric product inhibition by CTP. Inhibited by p-chloromercuriphenylsulfonic acid, N-ethylmaleimide and cyclopentenylcytosine (CPEC). Its function is as follows. Catalyzes the ATP-dependent amination of UTP to CTP with either L-glutamine or ammonia as the source of nitrogen. Plays an important role in the regulation of phospholipid synthesis. This is CTP synthase 2 (URA8) from Saccharomyces cerevisiae (strain YJM789) (Baker's yeast).